Reading from the N-terminus, the 172-residue chain is 3-hydroxydecanoyl-[acyl-carrier-protein] dehydratase (172 aa).

The active site involves histidine 71.

The protein belongs to the thioester dehydratase family. FabA subfamily. As to quaternary structure, homodimer.

Its subcellular location is the cytoplasm. It carries out the reaction a (3R)-hydroxyacyl-[ACP] = a (2E)-enoyl-[ACP] + H2O. The enzyme catalyses (3R)-hydroxydecanoyl-[ACP] = (2E)-decenoyl-[ACP] + H2O. The catalysed reaction is (2E)-decenoyl-[ACP] = (3Z)-decenoyl-[ACP]. Its pathway is lipid metabolism; fatty acid biosynthesis. Its function is as follows. Necessary for the introduction of cis unsaturation into fatty acids. Catalyzes the dehydration of (3R)-3-hydroxydecanoyl-ACP to E-(2)-decenoyl-ACP and then its isomerization to Z-(3)-decenoyl-ACP. Can catalyze the dehydratase reaction for beta-hydroxyacyl-ACPs with saturated chain lengths up to 16:0, being most active on intermediate chain length. This is 3-hydroxydecanoyl-[acyl-carrier-protein] dehydratase from Blochmanniella pennsylvanica (strain BPEN).